The following is a 371-amino-acid chain: F-box protein At2g26850 (371 aa).

Positions 59 to 105 (KMSILDLPDLPLDCILELLPPSELCTMARVCSSLRERCVSDHLWEKH) constitute an F-box domain.

The sequence is that of F-box protein At2g26850 from Arabidopsis thaliana (Mouse-ear cress).